The primary structure comprises 130 residues: Glycoprotein hormone beta-5 (130 aa).

A signal peptide spans 1 to 24 (MKLAFLFLGPMALLLLAGYGCVLG). Intrachain disulfides connect cysteine 36-cysteine 84, cysteine 50-cysteine 99, cysteine 60-cysteine 115, cysteine 64-cysteine 117, and cysteine 120-cysteine 127. An N-linked (GlcNAc...) asparagine glycan is attached at asparagine 87.

The protein belongs to the glycoprotein hormones subunit beta family. Heterodimer with GPHA2; this heterodimer interacts with thyroid-stimulating hormone receptor (TSHR), and hence stimulates cAMP production. N-glycosylated. Highly expressed in brain and at low levels in pituitary. Also found in retina, testis and skin but not in pancreas, parotid, kidney, stomach, liver, colon, small intestine, thyroid, brain or adrenal gland. In pituitary, colocalizes with ACTH, suggesting that it is located in corticotrophs.

The protein resides in the secreted. Functions as a heterodimeric glycoprotein hormone with GPHA2 able to bind and activate the thyroid-stimulating hormone receptor (TSHR), leading to increased cAMP production. Plays a central role in controlling thyroid cell metabolism. The polypeptide is Glycoprotein hormone beta-5 (GPHB5) (Homo sapiens (Human)).